Consider the following 565-residue polypeptide: Periplasmic trehalase (565 aa).

The signal sequence occupies residues 1–30 (MKSPAPSRPQKMALIPACIFLCFAALSVQA). Substrate is bound by residues arginine 152, 159-160 (WD), asparagine 196, 205-207 (RSQ), 277-279 (RPE), and glycine 310. Active-site proton donor/acceptor residues include aspartate 312 and glutamate 496. Glutamate 511 contributes to the substrate binding site. Residues 539 to 565 (CDNVPATRPLSESTTQPVKQKEAEPTP) form a disordered region.

This sequence belongs to the glycosyl hydrolase 37 family. Monomer.

Its subcellular location is the periplasm. The catalysed reaction is alpha,alpha-trehalose + H2O = alpha-D-glucose + beta-D-glucose. Its function is as follows. Provides the cells with the ability to utilize trehalose at high osmolarity by splitting it into glucose molecules that can subsequently be taken up by the phosphotransferase-mediated uptake system. The chain is Periplasmic trehalase from Escherichia coli O6:H1 (strain CFT073 / ATCC 700928 / UPEC).